The chain runs to 107 residues: Large ribosomal subunit protein uL24 (107 aa).

Belongs to the universal ribosomal protein uL24 family. In terms of assembly, part of the 50S ribosomal subunit.

Functionally, one of two assembly initiator proteins, it binds directly to the 5'-end of the 23S rRNA, where it nucleates assembly of the 50S subunit. Its function is as follows. One of the proteins that surrounds the polypeptide exit tunnel on the outside of the subunit. This is Large ribosomal subunit protein uL24 from Pelotomaculum thermopropionicum (strain DSM 13744 / JCM 10971 / SI).